The sequence spans 466 residues: Cysteine--tRNA ligase (466 aa).

Cysteine 27 contributes to the Zn(2+) binding site. The 'HIGH' region signature appears at 29-39 (PTVYDLAHIGN). Positions 211, 236, and 240 each coordinate Zn(2+). Residues 270 to 274 (KMSKS) carry the 'KMSKS' region motif. Residue lysine 273 coordinates ATP.

It belongs to the class-I aminoacyl-tRNA synthetase family. Monomer. Requires Zn(2+) as cofactor.

Its subcellular location is the cytoplasm. The enzyme catalyses tRNA(Cys) + L-cysteine + ATP = L-cysteinyl-tRNA(Cys) + AMP + diphosphate. The polypeptide is Cysteine--tRNA ligase (Anaplasma marginale (strain St. Maries)).